The sequence spans 361 residues: DNA replication and repair protein RecF (361 aa).

Gly-30 to Thr-37 contributes to the ATP binding site.

The protein belongs to the RecF family.

It is found in the cytoplasm. Its function is as follows. The RecF protein is involved in DNA metabolism; it is required for DNA replication and normal SOS inducibility. RecF binds preferentially to single-stranded, linear DNA. It also seems to bind ATP. The chain is DNA replication and repair protein RecF from Clostridium botulinum (strain Alaska E43 / Type E3).